A 1382-amino-acid polypeptide reads, in one-letter code: MEDIFNFFDKPKDPLHFSSIKISISSPDKIRERSFGEVKKPETINYRTFKPERDGLFCAKIFGPTKDYECNCGKYKRMKHRGIVCEKCGVEVIPSKVRRERLGHIDLATPVAHIWFLKSLPSRIGNLMDITLKDLEKVLYFEAYVVTDPKDTGLAFGTVFSEDQYQKALEEYSYGFEAGMGAAAIRTCLTSMDLDQLSEQLRIEMQEATSEAKRKKTAKRLKVIEAFKNSGNKPEWMILECIPVLPPELRPLVPLDGGRFATSDLNDLYRRVINRNNRLKRLMELQAPEVIIRNEKRMLQEAVDALFDNGRRGRAIAGPNKRPLKSLSDMLKGKSGRFRQNLLGKRVDYSGRSVIVVGPELRLHQCGLPKKMALELFKPFIYNKLEERGFVTTIKSAKKMVEKEKPEVWDVLEEVIKEHPVLLNRAPTLHRLGIQAFEPVLIEGKAIQLHPLVCTAFNADFDGDQMAVHLPLSVESQVEARVLMMSTNNILSPAHGKPIIVPSQDMVLGIYYMTRDKHFALGEGKIFASPDEVNIAWDAGEIHLQARIKVRMKNLVSDEKPTLIETTTGRVLLRDILPDAVPYATINKVMTKKELSNLVDVCYRLAGNKETVILADKLKAIGFRYAAKAGISISINDMVIPEGKPAIINRATEEVQEIQNQYTEGLITDGERYNKVIDIWAKSTEDIAKEMLDNLSRDTILDPEGKEVKVPSFNAIHMMADSGARGSAQQIRQLAGMRGLMAKPSGEIIETPITANFREGLTVLQYFISTHGARKGLADTALKTANSGYLTRRLVDVAQDAIITEADCGTIDGLTVSSLTEGGEVIEHIGDRILGRVALDDILDPVTGDVLVPANEEIDETLVAKIEAAGLEKVKIRSVLTCESRRGICAKCYGRDLARGHLVNRGEAVGVIAAQSIGEPGTQLTMRTFHIGGTASRRAEQTALEARNEGFAKFININYVTNSEGHHIVMNRNGELAIVDETGREREKYGVVYGAKIKVSPQEKVAQGQSVAEWDPYTMPILTEVAGRVKFGDVIEGVTMEEQVDEVTGLSRKVIIETRDTDKRPRITIKDESGKTAKIGENLLARYYLPVGSNINVLEEIEVNAGDVIAKIPRETTKTKDITGGLPRVAELFEARKPKDFAVITEIDGVVAFGKDAKGKRKVLVTPELGEPKEYLIPKGKHISVHEGDHVRAGEALMDGSSNPHDILRVLGQKELAKYLVDEVQEVYRLQGVKINDKHIETIVRQMLRRVRVKDVGDTNLLIDDQIERWVFEEENEKAMDKGGRPATAESLLLGITKASLSTESFISAASFQETTKVLTQASIEGKVDSLRGLKENVIMGRLIPAGTGLALYRNLRMVAEEPVIIPEPAEPEDEEIYEEEA.

Residues Cys-70, Cys-72, Cys-85, and Cys-88 each coordinate Zn(2+). Mg(2+) is bound by residues Asp-460, Asp-462, and Asp-464. Residues Cys-808, Cys-882, Cys-889, and Cys-892 each coordinate Zn(2+).

Belongs to the RNA polymerase beta' chain family. The RNAP catalytic core consists of 2 alpha, 1 beta, 1 beta' and 1 omega subunit. When a sigma factor is associated with the core the holoenzyme is formed, which can initiate transcription. The cofactor is Mg(2+). Zn(2+) is required as a cofactor.

The enzyme catalyses RNA(n) + a ribonucleoside 5'-triphosphate = RNA(n+1) + diphosphate. Functionally, DNA-dependent RNA polymerase catalyzes the transcription of DNA into RNA using the four ribonucleoside triphosphates as substrates. This Citrifermentans bemidjiense (strain ATCC BAA-1014 / DSM 16622 / JCM 12645 / Bem) (Geobacter bemidjiensis) protein is DNA-directed RNA polymerase subunit beta'.